We begin with the raw amino-acid sequence, 122 residues long: Large ribosomal subunit protein uL14 (122 aa).

The protein belongs to the universal ribosomal protein uL14 family. As to quaternary structure, part of the 50S ribosomal subunit. Forms a cluster with proteins L3 and L19. In the 70S ribosome, L14 and L19 interact and together make contacts with the 16S rRNA in bridges B5 and B8.

Binds to 23S rRNA. Forms part of two intersubunit bridges in the 70S ribosome. The polypeptide is Large ribosomal subunit protein uL14 (Baumannia cicadellinicola subsp. Homalodisca coagulata).